Consider the following 87-residue polypeptide: Translation initiation factor IF-1 2 (87 aa).

The S1-like domain occupies 1-72; it reads MAKEELIELN…TKGRINFRHK (72 aa). Residues 66–87 are disordered; the sequence is RINFRHKDERSGPPSRPPQHRR.

Belongs to the IF-1 family. In terms of assembly, component of the 30S ribosomal translation pre-initiation complex which assembles on the 30S ribosome in the order IF-2 and IF-3, IF-1 and N-formylmethionyl-tRNA(fMet); mRNA recruitment can occur at any time during PIC assembly.

It localises to the cytoplasm. In terms of biological role, one of the essential components for the initiation of protein synthesis. Stabilizes the binding of IF-2 and IF-3 on the 30S subunit to which N-formylmethionyl-tRNA(fMet) subsequently binds. Helps modulate mRNA selection, yielding the 30S pre-initiation complex (PIC). Upon addition of the 50S ribosomal subunit IF-1, IF-2 and IF-3 are released leaving the mature 70S translation initiation complex. In Bordetella parapertussis (strain 12822 / ATCC BAA-587 / NCTC 13253), this protein is Translation initiation factor IF-1 2.